The chain runs to 128 residues: MLFSHIVFVALSVFGLVQAIPSPLAKEGVVERATNADVTGVLNTLKGRTDTILPQINALVASGNVNDRNVKPLFDQLSSALKTADASLGKFKAQGSLAGKTRTRSLLLVPTSSRTSTPLSRRSPSTSR.

Residues 1 to 19 (MLFSHIVFVALSVFGLVQA) form the signal peptide.

In terms of biological role, plays a role in the regulation of fruiting body development. This is Fruiting body differentiation protein 16 from Flammulina velutipes (Agaricus velutipes).